The chain runs to 599 residues: Elongation factor 4 (599 aa).

The 184-residue stretch at 2–185 (KYIRNFSIIA…RIIIDIPVPQ (184 aa)) folds into the tr-type G domain. GTP contacts are provided by residues 14-19 (NHGKST) and 132-135 (NKID).

It belongs to the TRAFAC class translation factor GTPase superfamily. Classic translation factor GTPase family. LepA subfamily.

It is found in the cell inner membrane. It catalyses the reaction GTP + H2O = GDP + phosphate + H(+). Functionally, required for accurate and efficient protein synthesis under certain stress conditions. May act as a fidelity factor of the translation reaction, by catalyzing a one-codon backward translocation of tRNAs on improperly translocated ribosomes. Back-translocation proceeds from a post-translocation (POST) complex to a pre-translocation (PRE) complex, thus giving elongation factor G a second chance to translocate the tRNAs correctly. Binds to ribosomes in a GTP-dependent manner. The protein is Elongation factor 4 of Blochmanniella floridana.